Here is a 621-residue protein sequence, read N- to C-terminus: MTQEKKKFDAEVGKILNLMIHSLYSNKEIFMRELISNASDACDKLRYLSQSHSELVASDSNFKITVKVDKDNWQIIIRDNGIGMNKEDLIDNLGTIARSGTANFLKSLSGDSKKDNMLIGQFGVGFYSSFMVADKVTVTSRKAGEDTVHVWESDGLGEYIVSDSDKEFTRGTEIILHIKKEEDIFLDHFRLKHIVKSYSDHVAVPIYFFDEAGNNEIQLNSASALWTRPKSEITEEQYKEFYKSLSYAVDDPWITMHNKNEGAIEFTNLLFIPSSKTFDLFHPDRKRRVKLYIKRVFISDENIDLIPSYLRFLRGVVDSEDLPLNISRESLQHNSVLEKIKNAITKRVLGELRKKKEESSEEYNKFWANFGGALKEGLCEATTDHEKLLEVCIFRSALHNKMISLDEYIAGFKEEQNTIYYLSGDNPDKLLSSPQIEGLLSKNIDVLLFTDTVDDFWVNVNSEYKGHAIKSATRSDIDVEQTTSQSEDKNTHSKKSDDEYKLLTDYFKETLGKLVKEVKISKKLTSSPACLAVSDSAMDIRMERFLIEQKQITAASAKNLELNPKNKIIEKIFNDLKANNKNNEELVNLIFDQACILEGEPVADTGAFSKRLNDIVQKAIL.

An a; substrate-binding region spans residues 1-328; that stretch reads MTQEKKKFDA…SEDLPLNISR (328 aa). Residues 329 to 544 are b; it reads ESLQHNSVLE…DSAMDIRMER (216 aa). The interval 475-495 is disordered; that stretch reads SDIDVEQTTSQSEDKNTHSKK. Basic and acidic residues predominate over residues 486 to 495; that stretch reads SEDKNTHSKK. The tract at residues 545–621 is c; sequence FLIEQKQITA…LNDIVQKAIL (77 aa).

The protein belongs to the heat shock protein 90 family. In terms of assembly, homodimer.

It localises to the cytoplasm. Functionally, molecular chaperone. Has ATPase activity. In Rickettsia akari (strain Hartford), this protein is Chaperone protein HtpG.